Reading from the N-terminus, the 784-residue chain is Toll-like receptor 2 (784 aa).

An N-terminal signal peptide occupies residues 1 to 20; sequence MPRALWTAWVWAVIILSMEG. At 21–587 the chain is on the extracellular side; sequence ASHQASSLSC…ARLSLSECHR (567 aa). A disulfide bridge connects residues Cys30 and Cys36. LRR repeat units lie at residues 54-77, 78-101, 102-125, 126-150, 151-175, 176-199, 200-223, 224-250, 251-278, 279-308, 309-337, 338-361, 362-388, 389-414, 415-437, 438-457, 458-478, 479-500, and 501-524; these read VKSL…RCVN, LKTL…HLRN, LEYL…SLYA, LKFL…HLPN, LRTL…GLIF, LEEL…SIQN, ISHL…IVSS, LDCL…MNTS, VKKL…YVSG, ILEV…HLGN, VETL…LTGK, VKRV…HLKS, LEYL…AWPF, LQTL…TLKN, LNNL…WPGK, MKQL…CLPQ, TLEI…ILPQ, LKEL…FLPV, and LSVM…SFPQ. Asn114 is a glycosylation site (N-linked (GlcNAc...) asparagine). N-linked (GlcNAc...) asparagine glycosylation is present at Asn199. A glycan (N-linked (GlcNAc...) asparagine) is linked at Asn248. Residues Cys353 and Cys382 are joined by a disulfide bond. Cys432 and Cys454 are oxidised to a cystine. N-linked (GlcNAc...) asparagine glycosylation occurs at Asn442. An LRRCT domain is found at 525–579; it reads LKALEAGGNNFICSCDFLSFTQGQQALARVLVDWPDGYRCDAPSHVRGQRVQDAR. Residues 588–608 traverse the membrane as a helical segment; sequence AAVVSAVCCALFLLLLLTGVL. The Cytoplasmic segment spans residues 609–784; sequence CHRFHGLWYM…WLNLRAAIRS (176 aa). The TIR domain maps to 639-782; it reads LCYDAFVSYS…AFWLNLRAAI (144 aa). Lys754 is covalently cross-linked (Glycyl lysine isopeptide (Lys-Gly) (interchain with G-Cter in ubiquitin)). Positions 761 to 778 match the ATG16L1-binding motif motif; the sequence is YLEWPTDETQQEAFWLNL.

It belongs to the Toll-like receptor family. In terms of assembly, interacts with LY96, TLR1 and TLR6 (via extracellular domain). TLR2 seems to exist in heterodimers with either TLR1 or TLR6 before stimulation by the ligand. The heterodimers form bigger oligomers in response to their corresponding ligands as well as further heterotypic associations with other receptors such as CD14 and/or CD36. Binds MYD88 (via TIR domain). Interacts with TICAM1. Interacts with CNPY3. Interacts with ATG16L1. Interacts with PPP1R11. Interacts with TICAM2. Interacts with TIRAP. In terms of processing, ubiquitinated at Lys-754 by PPP1R11, leading to its degradation. Deubiquitinated by USP2. Post-translationally, glycosylation of Asn-442 is critical for secretion of the N-terminal ectodomain of TLR2.

Its subcellular location is the membrane. It localises to the cytoplasmic vesicle. The protein resides in the phagosome membrane. The protein localises to the membrane raft. Its function is as follows. Cooperates with LY96 to mediate the innate immune response to bacterial lipoproteins and other microbial cell wall components. Cooperates with TLR1 or TLR6 to mediate the innate immune response to bacterial lipoproteins or lipopeptides. Acts via MYD88 and TRAF6, leading to NF-kappa-B activation, cytokine secretion and the inflammatory response. May also promote apoptosis in response to lipoproteins. Forms activation clusters composed of several receptors depending on the ligand, these clusters trigger signaling from the cell surface and subsequently are targeted to the Golgi in a lipid-raft dependent pathway. Forms the cluster TLR2:TLR6:CD14:CD36 in response to diacylated lipopeptides and TLR2:TLR1:CD14 in response to triacylated lipopeptides. The chain is Toll-like receptor 2 (TLR2) from Capra hircus (Goat).